Here is a 425-residue protein sequence, read N- to C-terminus: Elongation factor 1-alpha (425 aa).

The tr-type G domain occupies 5–221 (KPHINLAVIG…DELEVPDKPT (217 aa)). A G1 region spans residues 14–21 (GHIDHGKS). 14-21 (GHIDHGKS) is a binding site for GTP. Serine 21 lines the Mg(2+) pocket. The segment at 70–74 (GITID) is G2. A G3 region spans residues 91–94 (DCPG). Residues 91 to 95 (DCPGH) and 146 to 149 (NKMD) each bind GTP. The interval 146-149 (NKMD) is G4. A G5 region spans residues 185–187 (SAF).

Belongs to the TRAFAC class translation factor GTPase superfamily. Classic translation factor GTPase family. EF-Tu/EF-1A subfamily.

The protein resides in the cytoplasm. It carries out the reaction GTP + H2O = GDP + phosphate + H(+). Functionally, GTP hydrolase that promotes the GTP-dependent binding of aminoacyl-tRNA to the A-site of ribosomes during protein biosynthesis. The sequence is that of Elongation factor 1-alpha from Methanospirillum hungatei JF-1 (strain ATCC 27890 / DSM 864 / NBRC 100397 / JF-1).